We begin with the raw amino-acid sequence, 131 residues long: Protein Turandot M (131 aa).

The signal sequence occupies residues 1–23 (MNPTIYLSCLMVFSVFLLGKVNA).

This sequence belongs to the Turandot family.

It localises to the secreted. A humoral factor that may play a role in stress tolerance. Requires Mekk1 expression in the fat body to regulate response to septic injury and consequent immune response. This Drosophila melanogaster (Fruit fly) protein is Protein Turandot M.